The primary structure comprises 353 residues: MLQLLKSSWVRSAGSGVVTWRASAGLFCPGTRQASDTSDTLHHPSPSSESQVQPVRVCSMMHLPLQSSPEGLDAAFVGVPLDTGTSNRPGARFGPRRIREESLMLGTVNPSTGALPFQSLRVADLGNVNVNLYNLQDSCRLIREAYQNILATGCIPLTLGGDHTITYPILQAVAKEHGPVGLVHVGAHSNTSDKPLEDKVYHRTPFRRSVDEGLLDSKRVVQIGIRGSSRTLDPYRYSRSQGFRVVLAEDCWMKSLVPLMAEIRQQMGGVPLYISFAIDALDPAYAPGTGTPEIAGLTPSQALEIIRGCQGLNVVGCDLVEVSPPYDLSGNTALLAANLLFEMLCALPKVTTV.

A mitochondrion-targeting transit peptide spans 1–33 (MLQLLKSSWVRSAGSGVVTWRASAGLFCPGTRQ). The tract at residues 29 to 52 (PGTRQASDTSDTLHHPSPSSESQV) is disordered. Mn(2+) is bound by residues His163 and His188. Residue Lys194 is modified to N6-acetyllysine. Lys218 carries the N6-acetyllysine; alternate modification. Lys218 is subject to N6-succinyllysine; alternate. Mn(2+) is bound at residue Asp279.

It belongs to the arginase family. Agmatinase subfamily. Requires Mn(2+) as cofactor.

It is found in the mitochondrion. It carries out the reaction 3-guanidinopropanoate + H2O = urea + beta-alanine. The catalysed reaction is 4-guanidinobutanoate + H2O = urea + 4-aminobutanoate. It catalyses the reaction taurocyamine + H2O = urea + taurine. The enzyme catalyses L-arginine + H2O = urea + L-ornithine. The protein operates within nitrogen metabolism; urea cycle; L-ornithine and urea from L-arginine: step 1/1. Its function is as follows. Hydrolyzes linear guanidino acids to form urea and the corresponding amines. Displays specificity for substrates having a negatively charged head group and short chains including taurocyamine, guanidino propanoic and butanoic acids. May protect cells by detoxifying potentially harmful amounts of guanidino acids. Metabolizes L-arginine with low efficiency. This chain is Guanidino acid hydrolase, mitochondrial (Agmat), found in Rattus norvegicus (Rat).